A 507-amino-acid chain; its full sequence is Nuclear poly(A) polymerase 3 (507 aa).

Residues 79–81 (YGS), 91–94 (SDID), Asp-147, Lys-208, Tyr-217, and 226–227 (GV) contribute to the ATP site. Residues Asp-92, Asp-94, and Asp-147 each coordinate Mg(2+).

The protein belongs to the poly(A) polymerase family. As to quaternary structure, monomer. Forms a complex with cleavage and polyadenylation specificity factor (CPSF) subunits FIPS5 and CPSF30. Requires Mg(2+) as cofactor. Mn(2+) is required as a cofactor. In terms of tissue distribution, expressed in leaves (mostly in petioles and tips), cotyledon, roots (tips, vascular tissue of the radicle, and throughout the root tissue excluding the elongation zone), stems, and flowers (restricted to the stigma and the pollen in mature anthers). Active in the primary and secondary root systems.

The protein resides in the nucleus. The enzyme catalyses RNA(n) + ATP = RNA(n)-3'-adenine ribonucleotide + diphosphate. Essential protein. Polymerase that creates the 3'-poly(A) tail of mRNA's. Also required for the endoribonucleolytic cleavage reaction at some polyadenylation sites. May acquire specificity through interaction with a cleavage and polyadenylation specificity factor (CPSF) at its C-terminus. The chain is Nuclear poly(A) polymerase 3 from Arabidopsis thaliana (Mouse-ear cress).